The following is a 127-amino-acid chain: MPSCDPGPGPACLPTKTFRSYLPRCHRTYSCVHCRAHLAKHDELISKSFQGSHGRAYLFNSVVNVGCGPAEQRLLLTGLHSVADIFCESCKTTLGWKYEQAFETSQKYKEGKYIIEMSHMVKDNGWD.

Residues 27–124 (RTYSCVHCRA…IEMSHMVKDN (98 aa)) form the Yippee domain. Zn(2+) contacts are provided by Cys-31, Cys-34, Cys-87, and Cys-90. A phosphothreonine mark is found at Thr-92 and Thr-93. Position 98 is a phosphotyrosine (Tyr-98).

Belongs to the yippee family.

The protein resides in the nucleus. It localises to the nucleolus. The protein is Protein yippee-like 4 (YPEL4) of Chlorocebus aethiops (Green monkey).